A 246-amino-acid chain; its full sequence is MKIVPPKPFFFEAGERAVLLLHGFTGNSADVRMLGRFLESKGYTCHAPIYKGHGVPPEELVHTGPDDWWQDVMNGYEFLKNKGYEKIAVAGLSLGGVFSLKLGYTVPIEGIVTMCAPMYIKSEETMYEGVLEYAREYKKREGKSEEQIEQEMEKFKQTPMKTLKALQELIADVRDHLDLIYAPTFVVQARHDEMINPDSANIIYNEIESPVKQIKWYEQSGHVITLDQEKDQLHEDIYAFLESLDW.

Catalysis depends on Ser-93, which acts as the Nucleophile. Catalysis depends on charge relay system residues Asp-192 and His-222.

The protein belongs to the lipase/esterase LIP3/BchO family. As to quaternary structure, homodimer.

It carries out the reaction a carboxylic ester + H2O = an alcohol + a carboxylate + H(+). In terms of biological role, involved in the detoxification of xenobiotics. Shows maximal activity with C6 substrates, with gradually decreasing activity from C8 to C12 substrates. No activity for higher chain length substrates acids rather than long-chain ones. This chain is Carboxylesterase (est), found in Geobacillus stearothermophilus (Bacillus stearothermophilus).